The chain runs to 881 residues: Ent-kaurene synthase CPS/KS, chloroplastic (881 aa).

A chloroplast-targeting transit peptide spans 1 to 41 (MASSTLIQNRSCGVTSSMSSFQIFRGQPLRFPGTRTPAAVQ). Mg(2+) contacts are provided by D417, D419, D635, D639, N778, D779, and E786. Positions 417-422 (DVDDTA) match the DXDDTA motif motif. Residues 635–639 (DDYFD) carry the DDXXD motif motif.

The protein belongs to the terpene synthase family. Mg(2+) is required as a cofactor.

It localises to the plastid. Its subcellular location is the chloroplast. It catalyses the reaction (2E,6E,10E)-geranylgeranyl diphosphate = ent-copalyl diphosphate. It carries out the reaction ent-copalyl diphosphate = ent-kaur-16-ene + diphosphate. The enzyme catalyses ent-copalyl diphosphate = ent-beyerene + diphosphate. The catalysed reaction is ent-copalyl diphosphate = ent-sandaracopimara-8(14),15-diene + diphosphate. It catalyses the reaction ent-copalyl diphosphate = ent-isokaurene + diphosphate. It carries out the reaction ent-copalyl diphosphate + H2O = 16alpha-hydroxy-ent-kaurene + diphosphate. It participates in secondary metabolite biosynthesis; terpenoid biosynthesis. In terms of biological role, bifunctional copalyl diphosphate/kaurene synthase involved in the biosynthesis of labdane-related diterpenoids (LRDs) natural products such as ent-beyerene, an antimicrobial compound. Supports the conversion of geranylgeranyl diphosphate (GGPP) to ent-copalyl diphosphate (ent-CDP). Also catalyzes the subsequent cyclization of ent-CDP into many diterpenes, including ent-kaur-16-ene as the major product, and ent-beyerene, ent-sandaracopimaradiene, ent-kaur-15-ene (ent-isokaurene) and 16-hydroxy-ent-kaurene (ent-16-alpha-hydroxy-kaurene) as minor products. This is Ent-kaurene synthase CPS/KS, chloroplastic from Physcomitrium patens (Spreading-leaved earth moss).